Consider the following 444-residue polypeptide: Enolase (444 aa).

Substrate-binding residues include His163 and Glu172. Glu215 serves as the catalytic Proton donor. 3 residues coordinate Mg(2+): Asp250, Glu300, and Asp327. Substrate is bound by residues Glu300 and Asp327. The active-site Proton acceptor is Lys352. Residues 379–382 and Lys403 contribute to the substrate site; that span reads SHRS.

The protein belongs to the enolase family. In terms of assembly, homodimer. Requires Mg(2+) as cofactor.

The protein resides in the cytoplasm. It carries out the reaction (2R)-2-phosphoglycerate = phosphoenolpyruvate + H2O. It participates in carbohydrate degradation; glycolysis; pyruvate from D-glyceraldehyde 3-phosphate: step 4/5. In Mesembryanthemum crystallinum (Common ice plant), this protein is Enolase (PGH1).